Here is a 709-residue protein sequence, read N- to C-terminus: Polyribonucleotide nucleotidyltransferase (709 aa).

Residues D485 and D491 each contribute to the Mg(2+) site. A KH domain is found at P552–I611. The S1 motif domain occupies G621 to K689.

Belongs to the polyribonucleotide nucleotidyltransferase family. In terms of assembly, component of the RNA degradosome, which is a multiprotein complex involved in RNA processing and mRNA degradation. Requires Mg(2+) as cofactor.

It localises to the cytoplasm. It catalyses the reaction RNA(n+1) + phosphate = RNA(n) + a ribonucleoside 5'-diphosphate. Involved in mRNA degradation. Catalyzes the phosphorolysis of single-stranded polyribonucleotides processively in the 3'- to 5'-direction. This chain is Polyribonucleotide nucleotidyltransferase, found in Haemophilus influenzae (strain 86-028NP).